A 170-amino-acid polypeptide reads, in one-letter code: Photosystem II extrinsic protein V (170 aa).

The N-terminal stretch at 1–33 (MASLFASLGRSLIKLLIVLPVIIGLSISSPAMA) is a signal peptide. Residues C70, C73, H74, and H125 each contribute to the heme c site.

It belongs to the cytochrome c family. PsbV subfamily. As to quaternary structure, PSII is composed of 1 copy each of membrane proteins PsbA, PsbB, PsbC, PsbD, PsbE, PsbF, PsbH, PsbI, PsbJ, PsbK, PsbL, PsbM, PsbT, PsbX, PsbY, Psb30/Ycf12, peripheral proteins PsbO, CyanoQ (PsbQ), PsbU, PsbV and a large number of cofactors. It forms dimeric complexes. Requires heme c as cofactor.

The protein localises to the cellular thylakoid membrane. In terms of biological role, one of the extrinsic, lumenal subunits of photosystem II (PSII). PSII is a light-driven water plastoquinone oxidoreductase, using light energy to abstract electrons from H(2)O, generating a proton gradient subsequently used for ATP formation. The extrinsic proteins stabilize the structure of photosystem II oxygen-evolving complex (OEC), the ion environment of oxygen evolution and protect the OEC against heat-induced inactivation. Low-potential cytochrome c that plays a role in the OEC of PSII. The polypeptide is Photosystem II extrinsic protein V (Prochlorococcus marinus (strain MIT 9303)).